We begin with the raw amino-acid sequence, 931 residues long: Dual O-methyltransferase/FAD-dependent monooxygenase elcB (931 aa).

The O-methyltransferase stretch occupies residues 1 to 463 (MAASTGLSTV…TTDKARPNGD (463 aa)). Aspartate 254 contacts S-adenosyl-L-methionine. Residue histidine 304 is the Proton acceptor of the active site. Positions 455–474 (TDKARPNGDTTHSGQASIPN) are disordered. Positions 462–474 (GDTTHSGQASIPN) are enriched in polar residues. Residues 464–931 (TTHSGQASIP…TFEELDVAEL (468 aa)) form an FAD-dependent monooxygenase region. FAD contacts are provided by glutamate 520, arginine 604, aspartate 836, and alanine 849.

In the C-terminal section; belongs to the paxM FAD-dependent monooxygenase family. This sequence in the N-terminal section; belongs to the class I-like SAM-binding methyltransferase superfamily. Cation-independent O-methyltransferase family. COMT subfamily.

It catalyses the reaction nor-toralactone + S-adenosyl-L-methionine = toralactone + S-adenosyl-L-homocysteine + H(+). The catalysed reaction is toralactone + NADH + O2 + H(+) = 1-(3,4,5-trihydroxy-7-methoxynaphthalen-2-yl)propan-2-one + CO2 + NAD(+). Its pathway is secondary metabolite biosynthesis. Functionally, dual O-methyltransferase/FAD-dependent monooxygenase; part of the gene cluster that mediates the biosynthesis of elsinochrome C, a perelyenequinone phytotoxin structurally similar to cercosporin. The first step of elsinochrome C biosynthesis is performed by the polyketide synthase elcA which catalyzes the formation of nor-toralactone. The starter unit acyltransferase (SAT) domain of elcA initiates polyketide extension by the selective utilization of acetyl-CoA, which is elongated to the heptaketide in the beta-ketoacyl synthase (KS) domain by successive condensations with six malonyl units introduced by the malonyl acyltransferase (MAT) domain. The product template (PT) domain catalyzes C4-C9 and C2-C11 aldol cyclizations and dehydrations to a trihydroxynaphthalene, which is thought to be delivered to the thioesterase (TE) domain for product release. The bifunctional enzyme elcB then methylates nor-toralactone to toralactone before conducting an unusual oxidative aromatic ring opening. The next step in perylenequinone biosynthesis is an O-methylation at the nascent OH-6 of the elcB product performed by the O-methyltransferase elcD. The oxidative coupling of the two monomeric naphthol units in perylenequinone biosynthesis is catalyzed by the FAD-dependent monooxygenase elcE and the multicopper oxidase elcG. ElcG might catalyze the first intermolecular coupling in a regio- and stereo-selective manner via a phenol radical coupling mechanism and the elcE could forge the second C-C bond intramolecularly via a hydride transfer mechanism. The fasciclin domain-containing protein elcF might also play a role duting this step. The last piece of the puzzle in the biosynthesis of elsinochrome C is the additional annulation by enolate coupling to afford the dihydrobenzo(ghi)perylenequinone system, catalyzed by the FAD-dependent monooxygenase elcH. This is Dual O-methyltransferase/FAD-dependent monooxygenase elcB from Phaeosphaeria nodorum (strain SN15 / ATCC MYA-4574 / FGSC 10173) (Glume blotch fungus).